Consider the following 441-residue polypeptide: ATP-dependent protease ATPase subunit HslU (441 aa).

ATP is bound by residues isoleucine 17, 60 to 65, aspartate 253, glutamate 319, and arginine 391; that span reads GVGKTE.

The protein belongs to the ClpX chaperone family. HslU subfamily. As to quaternary structure, a double ring-shaped homohexamer of HslV is capped on each side by a ring-shaped HslU homohexamer. The assembly of the HslU/HslV complex is dependent on binding of ATP.

The protein resides in the cytoplasm. Its function is as follows. ATPase subunit of a proteasome-like degradation complex; this subunit has chaperone activity. The binding of ATP and its subsequent hydrolysis by HslU are essential for unfolding of protein substrates subsequently hydrolyzed by HslV. HslU recognizes the N-terminal part of its protein substrates and unfolds these before they are guided to HslV for hydrolysis. This is ATP-dependent protease ATPase subunit HslU from Legionella pneumophila (strain Paris).